The following is a 194-amino-acid chain: Histone H1.0 (194 aa).

An N-acetylmethionine modification is found at Met1. Positions 1-26 (MTENSTSTPAAKPKRAKAAKKSTDHP) are disordered. An N-acetylthreonine; in Histone H1.0, N-terminally processed modification is found at Thr2. Residues 24-97 (DHPKYSDMIV…GASGSFRLAK (74 aa)) enclose the H15 domain. Position 42 is a citrulline (Arg42). The disordered stretch occupies residues 86–194 (GVGASGSFRL…SSAKRASKKK (109 aa)). Ser104 is modified (ADP-ribosylserine). A compositionally biased stretch (basic residues) spans 105–194 (VAFKKTKKEV…SSAKRASKKK (90 aa)).

This sequence belongs to the histone H1/H5 family. In terms of processing, ADP-ribosylated on Ser-104 in response to DNA damage.

It is found in the nucleus. The protein localises to the chromosome. Histones H1 are necessary for the condensation of nucleosome chains into higher-order structures. The histones H1.0 are found in cells that are in terminal stages of differentiation or that have low rates of cell division. This is Histone H1.0 (H1-0) from Rattus norvegicus (Rat).